A 67-amino-acid chain; its full sequence is uncharacterized protein (67 aa).

This is an uncharacterized protein from Haloarcula hispanica (His1V).